A 378-amino-acid chain; its full sequence is Putative glutamate--cysteine ligase 2 (378 aa).

This sequence belongs to the glutamate--cysteine ligase type 2 family. YbdK subfamily.

It catalyses the reaction L-cysteine + L-glutamate + ATP = gamma-L-glutamyl-L-cysteine + ADP + phosphate + H(+). In terms of biological role, ATP-dependent carboxylate-amine ligase which exhibits weak glutamate--cysteine ligase activity. This chain is Putative glutamate--cysteine ligase 2, found in Pseudomonas paraeruginosa (strain DSM 24068 / PA7) (Pseudomonas aeruginosa (strain PA7)).